A 115-amino-acid polypeptide reads, in one-letter code: UPF0145 protein lp_2083 (115 aa).

It belongs to the UPF0145 family.

In Lactiplantibacillus plantarum (strain ATCC BAA-793 / NCIMB 8826 / WCFS1) (Lactobacillus plantarum), this protein is UPF0145 protein lp_2083.